The following is a 238-amino-acid chain: Orotidine 5'-phosphate decarboxylase (238 aa).

Substrate contacts are provided by residues D10, K32, 59 to 68 (DLKLHDIPNT), T122, R184, Q193, G213, and R214. Residue K61 is the Proton donor of the active site.

Belongs to the OMP decarboxylase family. Type 1 subfamily. Homodimer.

The catalysed reaction is orotidine 5'-phosphate + H(+) = UMP + CO2. It participates in pyrimidine metabolism; UMP biosynthesis via de novo pathway; UMP from orotate: step 2/2. Its function is as follows. Catalyzes the decarboxylation of orotidine 5'-monophosphate (OMP) to uridine 5'-monophosphate (UMP). The chain is Orotidine 5'-phosphate decarboxylase from Bacillus cereus (strain ZK / E33L).